The sequence spans 101 residues: Putative RNA-binding protein RbpA (101 aa).

Positions 2–79 (SIYVGNLSYD…RDLKVNKAKP (78 aa)) constitute an RRM domain. The span at 73–83 (KVNKAKPRENR) shows a compositional bias: basic and acidic residues. A disordered region spans residues 73-101 (KVNKAKPRENRSGGGSFGGGRKSYGGSRY). A compositionally biased stretch (gly residues) spans 84 to 101 (SGGGSFGGGRKSYGGSRY).

The sequence is that of Putative RNA-binding protein RbpA (rbpA) from Synechocystis sp. (strain ATCC 27184 / PCC 6803 / Kazusa).